Here is a 692-residue protein sequence, read N- to C-terminus: Protein arginine N-methyltransferase 7 (692 aa).

2 SAM-dependent MTase PRMT-type domains span residues 14 to 345 (SLEW…YCVW) and 358 to 684 (SAYQ…ITME). Arg32 is subject to Omega-N-methylarginine. Residues Glu144 and Glu153 contribute to the active site.

The protein belongs to the class I-like SAM-binding methyltransferase superfamily. Protein arginine N-methyltransferase family. PRMT7 subfamily. In terms of assembly, homodimer and heterodimer. Interacts with PRMT5 and SNRPD3. Interacts with CTCFL.

It is found in the cytoplasm. It localises to the cytosol. The protein localises to the nucleus. It catalyses the reaction L-arginyl-[protein] + S-adenosyl-L-methionine = N(omega)-methyl-L-arginyl-[protein] + S-adenosyl-L-homocysteine + H(+). Arginine methyltransferase that can both catalyze the formation of omega-N monomethylarginine (MMA) and symmetrical dimethylarginine (sDMA), with a preference for the formation of MMA. Specifically mediates the symmetrical dimethylation of arginine residues in the small nuclear ribonucleoproteins Sm D1 (SNRPD1) and Sm D3 (SNRPD3); such methylation being required for the assembly and biogenesis of snRNP core particles. Specifically mediates the symmetric dimethylation of histone H4 'Arg-3' to form H4R3me2s. Plays a role in gene imprinting by being recruited by CTCFL at the H19 imprinted control region (ICR) and methylating histone H4 to form H4R3me2s, possibly leading to recruit DNA methyltransferases at these sites. May also play a role in embryonic stem cell (ESC) pluripotency. Also able to mediate the arginine methylation of histone H2A and myelin basic protein (MBP) in vitro; the relevance of such results is however unclear in vivo. In Mus musculus (Mouse), this protein is Protein arginine N-methyltransferase 7 (Prmt7).